We begin with the raw amino-acid sequence, 73 residues long: Beta-1 adrenergic receptor (73 aa).

A helical transmembrane segment spans residues 1-12 (ISALVSFLPILM). At 13 to 38 (HWWRAENDEARRCYNDPKCCDFVTNR) the chain is on the extracellular side. A disulfide bond links Cys25 and Cys31. The helical transmembrane segment at 39–64 (AYAIASSVVSFYVPLCIMAFVYLRVF) threads the bilayer. Cyanopindolol is bound at residue Ser44. At 65 to 73 (REAQKQVKK) the chain is on the cytoplasmic side.

The protein belongs to the G-protein coupled receptor 1 family. Adrenergic receptor subfamily. ADRB1 sub-subfamily. As to quaternary structure, interacts (via C-terminus PDZ motif) with RAPGEF2; the interaction is direct. Interacts with GOPC, MAGI3 and DLG4. In terms of processing, homologous desensitization of the receptor is mediated by its phosphorylation by beta-adrenergic receptor kinase.

It is found in the cell membrane. It localises to the early endosome. Its function is as follows. Beta-adrenergic receptors mediate the catecholamine-induced activation of adenylate cyclase through the action of G proteins. This receptor binds epinephrine and norepinephrine with approximately equal affinity. Mediates Ras activation through G(s)-alpha- and cAMP-mediated signaling. In dorsal pons neurons, involved in the regulation of sleep/wake behaviors. The polypeptide is Beta-1 adrenergic receptor (ADRB1) (Meriones unguiculatus (Mongolian jird)).